Consider the following 180-residue polypeptide: Magnetosome protein MamS (180 aa).

Residues 1 to 21 lie on the Cytoplasmic side of the membrane; sequence MDFRPDQVVARIRGAVEGALT. A helical transmembrane segment spans residues 22-42; the sequence is AQSVLGIGGALVLILVVIALL. Residues 43 to 180 are Lumenal-facing; the sequence is PDRFTRGEGK…EGLALWMTVQ (138 aa).

The protein belongs to the magnetosome MamS family.

The protein localises to the magnetosome membrane. Functionally, may play a role in magnetite crystal growth and size. This Magnetospirillum gryphiswaldense (strain DSM 6361 / JCM 21280 / NBRC 15271 / MSR-1) protein is Magnetosome protein MamS.